The sequence spans 278 residues: Ribosomal RNA small subunit methyltransferase A (278 aa).

S-adenosyl-L-methionine-binding residues include Asn-27, Leu-29, Gly-54, Glu-75, Asp-101, and Asn-120.

Belongs to the class I-like SAM-binding methyltransferase superfamily. rRNA adenine N(6)-methyltransferase family. RsmA subfamily.

The protein localises to the cytoplasm. It carries out the reaction adenosine(1518)/adenosine(1519) in 16S rRNA + 4 S-adenosyl-L-methionine = N(6)-dimethyladenosine(1518)/N(6)-dimethyladenosine(1519) in 16S rRNA + 4 S-adenosyl-L-homocysteine + 4 H(+). Its function is as follows. Specifically dimethylates two adjacent adenosines (A1518 and A1519) in the loop of a conserved hairpin near the 3'-end of 16S rRNA in the 30S particle. May play a critical role in biogenesis of 30S subunits. The protein is Ribosomal RNA small subunit methyltransferase A of Zymomonas mobilis subsp. mobilis (strain ATCC 31821 / ZM4 / CP4).